A 35-amino-acid polypeptide reads, in one-letter code: MEALVYTFLLVSTLGIIFFAIFFREPPKVPTKKMK.

The chain crosses the membrane as a helical span at residues 3–23 (ALVYTFLLVSTLGIIFFAIFF).

Belongs to the PsbT family. In terms of assembly, PSII is composed of 1 copy each of membrane proteins PsbA, PsbB, PsbC, PsbD, PsbE, PsbF, PsbH, PsbI, PsbJ, PsbK, PsbL, PsbM, PsbT, PsbY, PsbZ, Psb30/Ycf12, at least 3 peripheral proteins of the oxygen-evolving complex and a large number of cofactors. It forms dimeric complexes.

It localises to the plastid. The protein localises to the chloroplast thylakoid membrane. In terms of biological role, found at the monomer-monomer interface of the photosystem II (PS II) dimer, plays a role in assembly and dimerization of PSII. PSII is a light-driven water plastoquinone oxidoreductase, using light energy to abstract electrons from H(2)O, generating a proton gradient subsequently used for ATP formation. This is Photosystem II reaction center protein T from Stewartia pseudocamellia (Japanese stewartia).